Reading from the N-terminus, the 702-residue chain is Polyribonucleotide nucleotidyltransferase (702 aa).

Mg(2+) contacts are provided by D487 and D493. Positions 554–613 constitute a KH domain; sequence PRLLTIKIHPDKIREVIGKGGSTIQAITKETGTQIDIQDDGTIVIASVNAIAAQAAKARI. Residues 623-691 enclose the S1 motif domain; the sequence is GRIYEGKVAK…KQGRIRLSMK (69 aa).

It belongs to the polyribonucleotide nucleotidyltransferase family. As to quaternary structure, component of the RNA degradosome, which is a multiprotein complex involved in RNA processing and mRNA degradation. Mg(2+) is required as a cofactor.

The protein localises to the cytoplasm. It carries out the reaction RNA(n+1) + phosphate = RNA(n) + a ribonucleoside 5'-diphosphate. Functionally, involved in mRNA degradation. Catalyzes the phosphorolysis of single-stranded polyribonucleotides processively in the 3'- to 5'-direction. The protein is Polyribonucleotide nucleotidyltransferase of Stenotrophomonas maltophilia (strain K279a).